A 560-amino-acid polypeptide reads, in one-letter code: Bifunctional NAD(P)H-hydrate repair enzyme (560 aa).

An NAD(P)H-hydrate epimerase region spans residues 1–241 (MLSRLSERCS…WMTAPERMRA (241 aa)). Positions 29 to 235 (LRDAEPAAAA…SLGLEDWMTA (207 aa)) constitute a YjeF N-terminal domain. Residues 77-81 (NNGGD) are NADPHX 1; for epimerase activity. Residues asparagine 78 and aspartate 145 each contribute to the K(+) site. The interval 149 to 155 (GTGICGP) is NADPHX 1; for epimerase activity. (6S)-NADPHX is bound by residues tyrosine 160 and aspartate 178. Serine 181 is a binding site for K(+). In terms of domain architecture, YjeF C-terminal spans 249–547 (LDDVYEYFGI…HRVPLIVNAS (299 aa)). Residues 249 to 560 (LDDVYEYFGI…PATRQRSSGP (312 aa)) form an ADP-dependent (S)-NAD(P)H-hydrate dehydratase region. (6S)-NADPHX is bound at residue glycine 351. The tract at residues 417–423 (HPGEAAR) is NADPHX 2; for dehydratase activity. ADP is bound by residues 454–458 (KGPGT) and 475–484 (NAGMASGGMG). Aspartate 485 serves as a coordination point for (6S)-NADPHX.

This sequence in the N-terminal section; belongs to the NnrE/AIBP family. The protein in the C-terminal section; belongs to the NnrD/CARKD family. The cofactor is K(+).

The catalysed reaction is (6S)-NADHX + ADP = AMP + phosphate + NADH + H(+). It carries out the reaction (6S)-NADPHX + ADP = AMP + phosphate + NADPH + H(+). It catalyses the reaction (6R)-NADHX = (6S)-NADHX. The enzyme catalyses (6R)-NADPHX = (6S)-NADPHX. Bifunctional enzyme that catalyzes the epimerization of the S- and R-forms of NAD(P)HX and the dehydration of the S-form of NAD(P)HX at the expense of ADP, which is converted to AMP. This allows the repair of both epimers of NAD(P)HX, a damaged form of NAD(P)H that is a result of enzymatic or heat-dependent hydration. This Leishmania infantum protein is Bifunctional NAD(P)H-hydrate repair enzyme.